Reading from the N-terminus, the 66-residue chain is Large ribosomal subunit protein bL33c (66 aa).

It belongs to the bacterial ribosomal protein bL33 family.

The protein resides in the plastid. The protein localises to the chloroplast. The sequence is that of Large ribosomal subunit protein bL33c from Helianthus annuus (Common sunflower).